The following is an 829-amino-acid chain: Trimethylamine-N-oxide reductase (829 aa).

The tat-type signal signal peptide spans Met-1 to Ala-31. Mo-bis(molybdopterin guanine dinucleotide) is bound at residue Ser-180.

This sequence belongs to the prokaryotic molybdopterin-containing oxidoreductase family. It depends on Mo-bis(molybdopterin guanine dinucleotide) as a cofactor. In terms of processing, predicted to be exported by the Tat system. The position of the signal peptide cleavage has been experimentally proven.

It localises to the periplasm. It catalyses the reaction trimethylamine + 2 Fe(III)-[cytochrome c] + H2O = trimethylamine N-oxide + 2 Fe(II)-[cytochrome c] + 3 H(+). In terms of biological role, reduces trimethylamine-N-oxide (TMAO) into trimethylamine; an anaerobic reaction coupled to energy-yielding reactions. The sequence is that of Trimethylamine-N-oxide reductase (torA) from Shewanella massilia.